A 103-amino-acid chain; its full sequence is Cystatin-A1 (103 aa).

Positions 51–55 (QVVAG) match the Secondary area of contact motif.

This sequence belongs to the cystatin family.

Its subcellular location is the cytoplasm. Its function is as follows. This is an intracellular thiol proteinase inhibitor. The protein is Cystatin-A1 of Sus scrofa (Pig).